A 532-amino-acid chain; its full sequence is MSEQVIIFDTTLRDGEQALQASLSVKEKLQIAFALERMGVDVMEVGFPVSSPGDFESVQTIARNIKNSRVCGLTRCVEKDIDVAAEALRVAEAFRIHTFIATSPMHIATKLRSTLDEVIERAIYMIKRARNYTDDVEFSCEDAGRTPIPDLCRVVEAAINAGARTINIPDTVGYTMPHEFGNIIASLYQHVPNIDKAIISVHTHDDLGLAVGNAMAAVHAGARQVEGTLNGIGERAGNCSLEEVIMAIKTRHDILNVHTNINHQEIYRTSQLVSQICNMPIPANKAVVGANAFAHSSGIHQDGVLKNRENYEIMTPESIGLKEVQLNLTSRSGRAAVKHRMEEMGYQDNDYNLDDLYSAFLKLADKKGQVFDYDLEALAFISRQQEEPEFYHLDYFSVQSGSSVMATASVKLICGEETQSEAATGNGPVDAVYQAINRITGYQVSLVKYQLTAKGQGRDALGQVDIVADYQGRRFHGVGLATDIVESSAQAMVNVLNNIKRAQQVEKEIQRLQQHNNQQQNDSKQQNSQETV.

The region spanning 5–267 is the Pyruvate carboxyltransferase domain; that stretch reads VIIFDTTLRD…HTNINHQEIY (263 aa). Residues aspartate 14, histidine 202, histidine 204, and asparagine 238 each contribute to the Mn(2+) site. Residues 392–532 are regulatory domain; that stretch reads HLDYFSVQSG…SKQQNSQETV (141 aa). Residues 513 to 532 are disordered; the sequence is QQHNNQQQNDSKQQNSQETV.

It belongs to the alpha-IPM synthase/homocitrate synthase family. LeuA type 1 subfamily. In terms of assembly, homodimer. The cofactor is Mn(2+).

Its subcellular location is the cytoplasm. The catalysed reaction is 3-methyl-2-oxobutanoate + acetyl-CoA + H2O = (2S)-2-isopropylmalate + CoA + H(+). It participates in amino-acid biosynthesis; L-leucine biosynthesis; L-leucine from 3-methyl-2-oxobutanoate: step 1/4. Its function is as follows. Catalyzes the condensation of the acetyl group of acetyl-CoA with 3-methyl-2-oxobutanoate (2-ketoisovalerate) to form 3-carboxy-3-hydroxy-4-methylpentanoate (2-isopropylmalate). The chain is 2-isopropylmalate synthase from Pectobacterium atrosepticum (strain SCRI 1043 / ATCC BAA-672) (Erwinia carotovora subsp. atroseptica).